A 1325-amino-acid polypeptide reads, in one-letter code: uncharacterized protein (1325 aa).

Positions Met1 to Ala27 are cleaved as a signal peptide. The N-palmitoyl cysteine moiety is linked to residue Cys28. Cys28 is lipidated: S-diacylglycerol cysteine. Disordered stretches follow at residues Arg379–Gln402 and Asn430–Ser464. The span at Thr436–Ser448 shows a compositional bias: gly residues. The span at Thr449–Ser464 shows a compositional bias: low complexity.

It belongs to the MG307/MG309/MG338 family.

The protein resides in the cell membrane. This is an uncharacterized protein from Mycoplasma pneumoniae (strain ATCC 29342 / M129 / Subtype 1) (Mycoplasmoides pneumoniae).